We begin with the raw amino-acid sequence, 419 residues long: Cytosine permease (419 aa).

Topologically, residues 1 to 19 (MSQDNNFSQGPVPQSARKG) are cytoplasmic. A helical transmembrane segment spans residues 20-39 (VLALTFVMLGLTFFSASMWT). Residues 40-51 (GGTLGTGLSYHD) lie on the Periplasmic side of the membrane. A helical transmembrane segment spans residues 52-71 (FFLAVLIGNLLLGIYTSFLG). Over 72–100 (YIGAKTGLTTHLLARFSFGVKGSWLPSLL) the chain is Cytoplasmic. Residues 101-120 (LGGTQVGWFGVGVAMFAIPV) form a helical membrane-spanning segment. Residues 121–127 (GKATGLD) lie on the Periplasmic side of the membrane. The helical transmembrane segment at 128–147 (INLLIAVSGLLMTVTVFFGI) threads the bilayer. The Cytoplasmic portion of the chain corresponds to 148-152 (SALTV). A helical membrane pass occupies residues 153–172 (LSVIAVPAIACLGGYSVWLA). Over 173-192 (VNGMGGLDALKAVVPAQPLD) the chain is Periplasmic. A helical transmembrane segment spans residues 193–212 (FNVALALVVGSFISAGTLTA). At 213–221 (DFVRFGRNA) the chain is on the cytoplasmic side. Residues 222 to 242 (KLAVLVAMVAFFLGNSLMFIF) traverse the membrane as a helical segment. The Periplasmic segment spans residues 243 to 257 (GAAGAAALGMADISD). Residues 258–277 (VMIAQGLLLPAIVVLGLNIW) traverse the membrane as a helical segment. Residues 278-300 (TTNDNALYASGLGFANITGMSSK) are Cytoplasmic-facing. Residues 301–320 (TLSVINGIIGTVCALWLYNN) form a helical membrane-spanning segment. Phenylalanine 321 is a topological domain (periplasmic). The helical transmembrane segment at 322–341 (VGWLTFLSAAIPPVGGVIIA) threads the bilayer. Topologically, residues 342–358 (DYLMNRRRYEHFATTRM) are cytoplasmic. The helical transmembrane segment at 359–378 (MSVNWVAILAVALGIAAGHW) threads the bilayer. Over 379–380 (LP) the chain is Periplasmic. Residues 381–400 (GIVPVNAVLGGALSYLILNP) form a helical membrane-spanning segment. The Cytoplasmic portion of the chain corresponds to 401 to 419 (ILNRKTTAAMTHVEANSVE).

The protein belongs to the purine-cytosine permease (2.A.39) family.

It is found in the cell inner membrane. Its function is as follows. Required for cytosine transport into the cell. The sequence is that of Cytosine permease (codB) from Escherichia coli O6:H1 (strain CFT073 / ATCC 700928 / UPEC).